Consider the following 511-residue polypeptide: Bifunctional purine biosynthesis protein PurH (511 aa).

Positions 1-145 (MKKRALVSVS…KNHKFVSVIV (145 aa)) constitute an MGS-like domain.

Belongs to the PurH family.

The catalysed reaction is (6R)-10-formyltetrahydrofolate + 5-amino-1-(5-phospho-beta-D-ribosyl)imidazole-4-carboxamide = 5-formamido-1-(5-phospho-D-ribosyl)imidazole-4-carboxamide + (6S)-5,6,7,8-tetrahydrofolate. The enzyme catalyses IMP + H2O = 5-formamido-1-(5-phospho-D-ribosyl)imidazole-4-carboxamide. It participates in purine metabolism; IMP biosynthesis via de novo pathway; 5-formamido-1-(5-phospho-D-ribosyl)imidazole-4-carboxamide from 5-amino-1-(5-phospho-D-ribosyl)imidazole-4-carboxamide (10-formyl THF route): step 1/1. Its pathway is purine metabolism; IMP biosynthesis via de novo pathway; IMP from 5-formamido-1-(5-phospho-D-ribosyl)imidazole-4-carboxamide: step 1/1. The protein is Bifunctional purine biosynthesis protein PurH of Bacillus cereus (strain ATCC 10987 / NRS 248).